A 65-amino-acid chain; its full sequence is Hainantoxin-X.3 (65 aa).

Positions 1–20 (MNMKILVLVAVLCLVVSTHA) are cleaved as a signal peptide. The propeptide occupies 21–37 (ERHSKTDMGDSPMIQER). Cystine bridges form between cysteine 39-cysteine 56, cysteine 46-cysteine 59, and cysteine 55-cysteine 64.

This sequence belongs to the neurotoxin 36 family. 02 subfamily. As to expression, expressed by the venom gland.

It is found in the secreted. Its function is as follows. Reversibly blocks N-type calcium channels (Cav2.2/CACNA1B) in rat dorsal root ganglion cells. Elicits no toxic symptoms in either vertebrates or invertebrates during a period of 48 hours post-injection, when it was assayed in vivo by direct injection into mice and cockroaches. This chain is Hainantoxin-X.3, found in Cyriopagopus hainanus (Chinese bird spider).